A 298-amino-acid polypeptide reads, in one-letter code: N-acetylmuramic acid 6-phosphate etherase (298 aa).

The region spanning 55 to 218 (IHAQVSGGGR…STGLMIKSGK (164 aa)) is the SIS domain. Residue glutamate 83 is the Proton donor of the active site. The active site involves glutamate 114.

It belongs to the GCKR-like family. MurNAc-6-P etherase subfamily. Homodimer.

It carries out the reaction N-acetyl-D-muramate 6-phosphate + H2O = N-acetyl-D-glucosamine 6-phosphate + (R)-lactate. It participates in amino-sugar metabolism; 1,6-anhydro-N-acetylmuramate degradation. Its pathway is amino-sugar metabolism; N-acetylmuramate degradation. It functions in the pathway cell wall biogenesis; peptidoglycan recycling. In terms of biological role, specifically catalyzes the cleavage of the D-lactyl ether substituent of MurNAc 6-phosphate, producing GlcNAc 6-phosphate and D-lactate. Together with AnmK, is also required for the utilization of anhydro-N-acetylmuramic acid (anhMurNAc) either imported from the medium or derived from its own cell wall murein, and thus plays a role in cell wall recycling. This is N-acetylmuramic acid 6-phosphate etherase from Shigella boydii serotype 18 (strain CDC 3083-94 / BS512).